Consider the following 244-residue polypeptide: UPF0246 protein FMG_1068 (244 aa).

This sequence belongs to the UPF0246 family.

In Finegoldia magna (strain ATCC 29328 / DSM 20472 / WAL 2508) (Peptostreptococcus magnus), this protein is UPF0246 protein FMG_1068.